Reading from the N-terminus, the 49-residue chain is Delta-actitoxin-Axm1h (49 aa).

Disulfide bonds link Cys-4–Cys-46, Cys-6–Cys-36, and Cys-29–Cys-47.

Belongs to the sea anemone sodium channel inhibitory toxin family. Type I subfamily.

It localises to the secreted. Its subcellular location is the nematocyst. Its function is as follows. Binds specifically to voltage-gated sodium channels (Nav) (site 3), thereby delaying their inactivation during signal transduction. Thus it may strongly stimulate mammalian cardiac muscle contraction. In Anthopleura xanthogrammica (Giant green sea anemone), this protein is Delta-actitoxin-Axm1h.